Reading from the N-terminus, the 456-residue chain is Glycine--tRNA ligase (456 aa).

Residues R98 and E168 each contribute to the substrate site. Residues 200–202 (RNE), 210–215 (FRTREF), 285–286 (EL), and 329–332 (GVER) each bind ATP. 215 to 219 (FEQME) serves as a coordination point for substrate. 325–329 (EPSVG) provides a ligand contact to substrate.

Belongs to the class-II aminoacyl-tRNA synthetase family. As to quaternary structure, homodimer.

Its subcellular location is the cytoplasm. It catalyses the reaction tRNA(Gly) + glycine + ATP = glycyl-tRNA(Gly) + AMP + diphosphate. Functionally, catalyzes the attachment of glycine to tRNA(Gly). The protein is Glycine--tRNA ligase of Mycoplasma capricolum subsp. capricolum (strain California kid / ATCC 27343 / NCTC 10154).